The following is a 473-amino-acid chain: Photosystem II CP43 reaction center protein (473 aa).

Positions 1 to 14 are excised as a propeptide; sequence MKTLYSLRRFYHVE. Threonine 15 is subject to N-acetylthreonine. Threonine 15 is modified (phosphothreonine). A run of 5 helical transmembrane segments spans residues 69–93, 134–155, 178–200, 255–275, and 291–312; these read LFEVAHYIPEKPLYEQGLILLPHLA, LIGPDTLEESFPAFGYDWRDKN, KAIYVGGLYDTWAPGGGDVRIID, KPFAWARRAYVWSGEAYLSYS, and WYNNTVYPSEFYGPTGPEASQS. Glutamate 367 is a [CaMn4O5] cluster binding site. The helical transmembrane segment at 447 to 471 threads the bilayer; it reads RARAAAAGFEKGINRENEPVLTLRP.

The protein belongs to the PsbB/PsbC family. PsbC subfamily. As to quaternary structure, PSII is composed of 1 copy each of membrane proteins PsbA, PsbB, PsbC, PsbD, PsbE, PsbF, PsbH, PsbI, PsbJ, PsbK, PsbL, PsbM, PsbT, PsbX, PsbY, PsbZ, Psb30/Ycf12, at least 3 peripheral proteins of the oxygen-evolving complex and a large number of cofactors. It forms dimeric complexes. Binds multiple chlorophylls and provides some of the ligands for the Ca-4Mn-5O cluster of the oxygen-evolving complex. It may also provide a ligand for a Cl- that is required for oxygen evolution. PSII binds additional chlorophylls, carotenoids and specific lipids. is required as a cofactor.

Its subcellular location is the plastid. The protein localises to the chloroplast thylakoid membrane. In terms of biological role, one of the components of the core complex of photosystem II (PSII). It binds chlorophyll and helps catalyze the primary light-induced photochemical processes of PSII. PSII is a light-driven water:plastoquinone oxidoreductase, using light energy to abstract electrons from H(2)O, generating O(2) and a proton gradient subsequently used for ATP formation. The protein is Photosystem II CP43 reaction center protein of Guillardia theta (Cryptophyte).